Consider the following 1026-residue polypeptide: Multidrug resistance protein MdtC (1026 aa).

A run of 11 helical transmembrane segments spans residues 15–35, 333–353, 360–380, 387–407, 431–451, 463–483, 528–548, 853–873, 897–917, 953–973, and 984–1004; these read ILIA…LPVA, EVEE…FLFL, LIPA…MYLC, LSLM…IVVL, VGFT…PLLL, FAVT…TLTP, LVGV…IAIP, LILI…LYES, LFNA…IGIV, PIMM…LSDG, and ITIV…TPVV.

It belongs to the resistance-nodulation-cell division (RND) (TC 2.A.6) family. MdtC subfamily. Part of a tripartite efflux system composed of MdtA, MdtB and MdtC. MdtC forms a heteromultimer with MdtB.

The protein resides in the cell inner membrane. The protein is Multidrug resistance protein MdtC of Salmonella heidelberg (strain SL476).